The sequence spans 117 residues: UPF0102 protein RHOS4_03930 (117 aa).

Belongs to the UPF0102 family.

The sequence is that of UPF0102 protein RHOS4_03930 from Cereibacter sphaeroides (strain ATCC 17023 / DSM 158 / JCM 6121 / CCUG 31486 / LMG 2827 / NBRC 12203 / NCIMB 8253 / ATH 2.4.1.) (Rhodobacter sphaeroides).